We begin with the raw amino-acid sequence, 3051 residues long: Biorientation of chromosomes in cell division protein 1-like 1 (3051 aa).

Over residues 1–33 (MATNPQPQPPPPAPPPPPPQPQPQPPPPPPGPG) the composition is skewed to pro residues. Disordered regions lie at residues 1-47 (MATN…AGAG), 164-197 (HKEEGSGNTAPDDEKPDTSLITQGVPTPGPSANV), 215-288 (ASAA…CPVE), 301-393 (ILLN…KEDF), and 411-469 (VHTS…VRHA). The span at 34–47 (AGPGAGGAGGAGAG) shows a compositional bias: gly residues. A compositionally biased stretch (low complexity) spans 215–227 (ASAARASTETSNA). A compositionally biased stretch (basic and acidic residues) spans 246–263 (STDKERTSEDMADKEKST). At S266 the chain carries Phosphoserine. Residues 312–393 (SEQKNKSTDK…KTVEGTKEDF (82 aa)) are compositionally biased toward basic and acidic residues. Residues 418 to 443 (SFEEDTEEEVVTSDSMEEGEITSDDE) are compositionally biased toward acidic residues. K473 carries the post-translational modification N6-acetyllysine. A phosphoserine mark is found at S482 and S484. Composition is skewed to basic and acidic residues over residues 497–527 (IAKEKEERLLRRQINREKLEEKRKQKAEKTK), 549–570 (LEPKAARIKEVLKERKVLEKKV), and 580–653 (SRNV…LERE). The interval 497–1203 (IAKEKEERLL…EKHADHRSTL (707 aa)) is disordered. A phosphoserine mark is found at S635 and S659. Residues T660 and T733 each carry the phosphothreonine modification. 6 stretches are compositionally biased toward basic and acidic residues: residues 671–772 (TDTR…EENI), 804–852 (KDGK…KIQK), 866–878 (RRSESYSEDKCDM), 940–966 (KPDKEKNTEENDSEKQRKSKVEDKPFE), 984–1021 (TQKDSSHRAKLPLAKEKYKSDKDSTSTRLERKLSDGHK), and 1028–1075 (SSKD…ENRR). Residue S1077 is modified to Phosphoserine. 2 stretches are compositionally biased toward polar residues: residues 1092 to 1103 (NTLSTPSGSSLQ) and 1135 to 1148 (SKTQDNRNNNSQQD). 2 positions are modified to phosphoserine: S1145 and S1318. T1354 bears the Phosphothreonine mark. Disordered stretches follow at residues 1456–1550 (KLKH…QSEV), 1700–1725 (GSISSEEVDGSQGNMMRMGPKKETEG), and 1760–1890 (VVLG…TGLG). Residues 1465-1479 (KVKDISIDVERRNEN) show a composition bias toward basic and acidic residues. Positions 1482 to 1504 (VDTSAGSGSAPSVLHQRNGQTED) are enriched in polar residues. Residues S1531, S1701, and S1710 each carry the phosphoserine modification. A phosphoserine mark is found at S2013, S2025, S2128, and S2203. Disordered regions lie at residues 2189–2210 (DFEGPMPSAPPEAESPLASTSK), 2258–2285 (TSSVEDCEGPVSSAVPQEEGDPSVTPAE), 2403–2447 (STEE…FAGR), 2472–2519 (EDKS…AKDP), 2615–2635 (DQASAEKTGDDNSTRKSFPEE), and 2717–3051 (VENS…KAKR). Positions 2191-2207 (EGPMPSAPPEAESPLAS) are enriched in low complexity. The span at 2428-2439 (AEKEEKHGKECP) shows a compositional bias: basic and acidic residues. S2475 carries the phosphoserine modification. Over residues 2483 to 2492 (GSSTASYSAG) the composition is skewed to low complexity. Phosphoserine is present on residues S2501 and S2618. 3 stretches are compositionally biased toward basic and acidic residues: residues 2621 to 2633 (KTGDDNSTRKSFP), 2724 to 2746 (TNEEIHSESYNKGEISSGRKDNA), and 2754 to 2767 (VEADPKEVEEEERH). Acidic residues predominate over residues 2780-2789 (SEDEPDDNPD). Over residues 2791–2822 (LDSRIETAQRQCPETEPHDTKEENSRDLEELP) the composition is skewed to basic and acidic residues. A compositionally biased stretch (polar residues) spans 2823–2834 (KTSSETNSTTSR). Over residues 2848-2864 (TGEKPEQNDDDTIKSQE) the composition is skewed to basic and acidic residues. The span at 2871–2880 (IKRKRGRPRK) shows a compositional bias: basic residues. Residues 2872 to 2884 (KRKRGRPRKYPVE) constitute a DNA-binding region (a.T hook). The segment covering 2896-2910 (DTGIVTVEQSPSSSK) has biased composition (polar residues). Residues S2905 and S2907 each carry the phosphoserine modification. Residues 2944–2953 (VRRRGRKPKR) are compositionally biased toward basic residues. S2954 bears the Phosphoserine mark. T2956 carries the phosphothreonine modification. Phosphoserine is present on residues S2958, S2964, and S2973. Glycyl lysine isopeptide (Lys-Gly) (interchain with G-Cter in ubiquitin) cross-links involve residues K2981 and K2982. The span at 2985–2998 (ESDEEEEEEEEDEP) shows a compositional bias: acidic residues. Phosphoserine is present on residues S2986 and S3019. The span at 3000-3020 (GATTRSTTRSEAQRSKTQLSP) shows a compositional bias: polar residues. Residues 3039–3051 (QRVEEAPVKKAKR) show a composition bias toward basic and acidic residues.

This sequence belongs to the BOD1 family. Interacts (via COMPASS-Shg1 domain) with SETD1A at stalled replication forks; this interaction mediates FANCD2-dependent nucleosome remodeling at reversed forks protecting them from nucleolytic degradation.

The protein resides in the chromosome. Its function is as follows. Component of the fork protection machinery required to protect stalled/damaged replication forks from uncontrolled DNA2-dependent resection. Acts by stabilizing RAD51 at stalled replication forks and protecting RAD51 nucleofilaments from the antirecombinogenic activities of FBH1 and BLM. Does not regulate spindle orientation. The chain is Biorientation of chromosomes in cell division protein 1-like 1 from Homo sapiens (Human).